A 194-amino-acid polypeptide reads, in one-letter code: MRLSGDPRILSVIMVKTNILSNHFLVAMPQLNDFTFTKAVIYVSQHDAKGALGIIINRPLALTLGKVLEHLNIEIAQPQIANHPVLMGGPIGQEHGFIVYEQESPQGAEILLSASKDMLDDIAKNKGPDDFLITLGYAGWEAGQLENEIARNDWLVVPFNRKILFETPLKSRWQKAAALIGVDINQLSGQIGHA.

Belongs to the UPF0301 (AlgH) family.

The protein is UPF0301 protein CBU_2093 of Coxiella burnetii (strain RSA 493 / Nine Mile phase I).